The primary structure comprises 287 residues: Large ribosomal subunit protein uL2 (287 aa).

The disordered stretch occupies residues 221-287; that stretch reads RGSVMNPCDH…SKRSRGGRDS (67 aa). The segment covering 258 to 287 has biased composition (basic residues); the sequence is KTRKKNKPSNKLVVRRRRRISKRSRGGRDS.

This sequence belongs to the universal ribosomal protein uL2 family. In terms of assembly, part of the 50S ribosomal subunit. Forms a bridge to the 30S subunit in the 70S ribosome.

In terms of biological role, one of the primary rRNA binding proteins. Required for association of the 30S and 50S subunits to form the 70S ribosome, for tRNA binding and peptide bond formation. It has been suggested to have peptidyltransferase activity; this is somewhat controversial. Makes several contacts with the 16S rRNA in the 70S ribosome. The protein is Large ribosomal subunit protein uL2 of Prochlorococcus marinus (strain MIT 9301).